A 605-amino-acid chain; its full sequence is DNA mismatch repair protein MutL (605 aa).

Belongs to the DNA mismatch repair MutL/HexB family.

In terms of biological role, this protein is involved in the repair of mismatches in DNA. It is required for dam-dependent methyl-directed DNA mismatch repair. May act as a 'molecular matchmaker', a protein that promotes the formation of a stable complex between two or more DNA-binding proteins in an ATP-dependent manner without itself being part of a final effector complex. The polypeptide is DNA mismatch repair protein MutL (Pelotomaculum thermopropionicum (strain DSM 13744 / JCM 10971 / SI)).